A 293-amino-acid polypeptide reads, in one-letter code: MSTSHESHHAPVDGAGGPSTTGHEWDGIQELNNPLPRWWLWTFYATIIWAFGYWVAYPAWPLVSNYTSGVLGWNSRSAVVEQISDLQKLRAASSAKLANVPLEDIEKNPELLSLARAEGKVAFADNCAPCHGAGGGGAKGFPNLNDDDWLWGGTLAQIQQTITHGIRSGDDEGHQGNMLAFGSILSKADISNVADYVRSLSGAAPGDTPAAKKGAEIFAANCATCHGENGKGNQELGSKNLTDGIWLYGGDKATIVQTITNGRGGVMPAWGPRLSPTTIKALTVYVHTLGGGQ.

Positions 1-11 are enriched in basic and acidic residues; sequence MSTSHESHHAP. The disordered stretch occupies residues 1–25; that stretch reads MSTSHESHHAPVDGAGGPSTTGHEW. The helical transmembrane segment at 43–63 threads the bilayer; sequence FYATIIWAFGYWVAYPAWPLV. 2 consecutive Cytochrome c domains span residues 114–201 and 209–290; these read LARA…RSLS and PAAK…HTLG. Residues Cys127, Cys130, His131, Met178, Cys222, Cys225, His226, and Met267 each contribute to the heme c site.

Belongs to the CcoP / FixP family. As to quaternary structure, component of the cbb3-type cytochrome c oxidase at least composed of FixN, FixO, FixQ and FixP. Heme c serves as cofactor.

The protein localises to the cell inner membrane. The protein operates within energy metabolism; oxidative phosphorylation. In terms of biological role, C-type cytochrome. Part of the cbb3-type cytochrome c oxidase complex. FixP subunit is required for transferring electrons from donor cytochrome c via its heme groups to FixO subunit. From there, electrons are shuttled to the catalytic binuclear center of FixN subunit where oxygen reduction takes place. The complex also functions as a proton pump. This chain is Cbb3-type cytochrome c oxidase subunit FixP, found in Azorhizobium caulinodans (strain ATCC 43989 / DSM 5975 / JCM 20966 / LMG 6465 / NBRC 14845 / NCIMB 13405 / ORS 571).